A 428-amino-acid polypeptide reads, in one-letter code: Adenylosuccinate synthetase (428 aa).

Residues 12-18 (GDEGKGK) and 40-42 (GHT) each bind GTP. Aspartate 13 functions as the Proton acceptor in the catalytic mechanism. Residues aspartate 13 and glycine 40 each contribute to the Mg(2+) site. IMP is bound by residues 13 to 16 (DEGK), 38 to 41 (NAGH), threonine 130, arginine 144, glutamine 224, threonine 239, and arginine 303. Catalysis depends on histidine 41, which acts as the Proton donor. 299 to 305 (VTTGRSR) is a binding site for substrate. Residues arginine 305, 331–333 (KID), and 413–415 (GVG) contribute to the GTP site.

It belongs to the adenylosuccinate synthetase family. In terms of assembly, homodimer. The cofactor is Mg(2+).

It localises to the cytoplasm. The catalysed reaction is IMP + L-aspartate + GTP = N(6)-(1,2-dicarboxyethyl)-AMP + GDP + phosphate + 2 H(+). It participates in purine metabolism; AMP biosynthesis via de novo pathway; AMP from IMP: step 1/2. In terms of biological role, plays an important role in the de novo pathway of purine nucleotide biosynthesis. Catalyzes the first committed step in the biosynthesis of AMP from IMP. The sequence is that of Adenylosuccinate synthetase from Clostridium perfringens (strain 13 / Type A).